A 295-amino-acid chain; its full sequence is Shikimate dehydrogenase (NADP(+)) (295 aa).

Shikimate contacts are provided by residues 21–23 (SLS) and T68. K72 (proton acceptor) is an active-site residue. Shikimate contacts are provided by N93 and D108. Residues 132-136 (GAGGA), 156-161 (NRTPER), and L228 each bind NADP(+). Shikimate is bound at residue Y230. G251 contributes to the NADP(+) binding site.

This sequence belongs to the shikimate dehydrogenase family. As to quaternary structure, homodimer.

It catalyses the reaction shikimate + NADP(+) = 3-dehydroshikimate + NADPH + H(+). It functions in the pathway metabolic intermediate biosynthesis; chorismate biosynthesis; chorismate from D-erythrose 4-phosphate and phosphoenolpyruvate: step 4/7. Its function is as follows. Involved in the biosynthesis of the chorismate, which leads to the biosynthesis of aromatic amino acids. Catalyzes the reversible NADPH linked reduction of 3-dehydroshikimate (DHSA) to yield shikimate (SA). In Moorella thermoacetica (strain ATCC 39073 / JCM 9320), this protein is Shikimate dehydrogenase (NADP(+)).